Consider the following 382-residue polypeptide: Rubredoxin-NAD(+) reductase (382 aa).

FAD contacts are provided by residues 9-12 (TGLA), 33-34 (TA), Lys42, Val80, Glu156, Asp275, Val287, and Lys318.

Belongs to the FAD-dependent oxidoreductase family. In terms of assembly, homodimer. Requires FAD as cofactor.

The protein resides in the cytoplasm. The catalysed reaction is 2 reduced [rubredoxin] + NAD(+) + H(+) = 2 oxidized [rubredoxin] + NADH. It participates in hydrocarbon metabolism; alkane degradation. Involved in the hydrocarbon hydroxylating system, which transfers electrons from NADH to rubredoxin reductase and then through rubredoxin to alkane 1 monooxygenase. In Alcanivorax borkumensis (strain ATCC 700651 / DSM 11573 / NCIMB 13689 / SK2), this protein is Rubredoxin-NAD(+) reductase (rubB).